Here is a 126-residue protein sequence, read N- to C-terminus: Aspartate 1-decarboxylase (126 aa).

Catalysis depends on Ser-25, which acts as the Schiff-base intermediate with substrate; via pyruvic acid. Ser-25 bears the Pyruvic acid (Ser) mark. Thr-57 serves as a coordination point for substrate. Residue Tyr-58 is the Proton donor of the active site. 73–75 contacts substrate; the sequence is GAA.

It belongs to the PanD family. As to quaternary structure, heterooctamer of four alpha and four beta subunits. Pyruvate is required as a cofactor. Post-translationally, is synthesized initially as an inactive proenzyme, which is activated by self-cleavage at a specific serine bond to produce a beta-subunit with a hydroxyl group at its C-terminus and an alpha-subunit with a pyruvoyl group at its N-terminus.

It is found in the cytoplasm. The enzyme catalyses L-aspartate + H(+) = beta-alanine + CO2. Its pathway is cofactor biosynthesis; (R)-pantothenate biosynthesis; beta-alanine from L-aspartate: step 1/1. In terms of biological role, catalyzes the pyruvoyl-dependent decarboxylation of aspartate to produce beta-alanine. This chain is Aspartate 1-decarboxylase, found in Halorhodospira halophila (strain DSM 244 / SL1) (Ectothiorhodospira halophila (strain DSM 244 / SL1)).